The primary structure comprises 364 residues: MKALILVGGFGTRLRPLTLSWPKPLVEFCNKAMILHQIEALVKAGVKDIVLAVNYRPEVMVSVLKKTEEEFGINIHFSVETEPLGTAGPLALAREILGKDDSPFFVLNSDVTCVYPFEAFRDFHIAHKCEGSIMVTKVAEPSAYGVVVTKPNSTVIDRFVEKPVEFVGNRINAGIYIFNPSVLDRIELRPTSIEKEIFPAIAADQQLHSFDLQGFWMDVGQPKDFLAGTCLYLSHLTSQHSPLLTDPSQNKWVYGGNVMVDPSAEIDPTAVIGPNVVIGPDAKIGPGVRLQRCVIMSNATVRDHSWIANSIVGWNSTVGRWTRVENITVLGDDVTIKDELYVNGASVLPHKSISTSITEPRIVM.

The protein belongs to the transferase hexapeptide repeat family.

It localises to the cytoplasm. It carries out the reaction alpha-D-mannose 1-phosphate + GTP + H(+) = GDP-alpha-D-mannose + diphosphate. Its pathway is nucleotide-sugar biosynthesis; GDP-alpha-D-mannose biosynthesis; GDP-alpha-D-mannose from alpha-D-mannose 1-phosphate (GTP route): step 1/1. Its function is as follows. Involved in cell wall synthesis where it is required for glycosylation. Involved in cell cycle progression through cell-size checkpoint. This is Mannose-1-phosphate guanyltransferase (MPG1) from Cryptococcus neoformans var. neoformans serotype D (strain B-3501A) (Filobasidiella neoformans).